The sequence spans 188 residues: Ribosome-recycling factor (188 aa).

The protein belongs to the RRF family.

The protein resides in the cytoplasm. Its function is as follows. Responsible for the release of ribosomes from messenger RNA at the termination of protein biosynthesis. May increase the efficiency of translation by recycling ribosomes from one round of translation to another. In Cereibacter sphaeroides (strain ATCC 17029 / ATH 2.4.9) (Rhodobacter sphaeroides), this protein is Ribosome-recycling factor.